Here is a 219-residue protein sequence, read N- to C-terminus: KP6 killer toxin (219 aa).

The N-terminal stretch at 1-19 is a signal peptide; the sequence is MLIFSVLMYLGLLLAGASA. Positions 20 to 27 are excised as a propeptide; the sequence is LPNGLSPR. 4 disulfide bridges follow: cysteine 32/cysteine 39, cysteine 43/cysteine 101, cysteine 45/cysteine 92, and cysteine 62/cysteine 78. A glycan (N-linked (GlcNAc...) asparagine; by host) is linked at asparagine 98. Positions 106-138 are excised as a propeptide; that stretch reads KRTIQDSATDTVDLGAELHRDDPPPTASDIGKR. Residues 120–142 are disordered; the sequence is GAELHRDDPPPTASDIGKRGKRP.

As to quaternary structure, heterodimer of two small polypeptides that are not covalently linked.

It localises to the secreted. Its function is as follows. This protein is lethal to sensitive cells of the same or related species. The KP6 alpha subunit is known to recognize some cellular receptors before interaction of the complex with KP6 beta, precipitating cell death. This chain is KP6 killer toxin, found in Ustilago maydis P6 virus (UmV6).